Consider the following 382-residue polypeptide: Putative glutamate--cysteine ligase 2-1 (382 aa).

It belongs to the glutamate--cysteine ligase type 2 family. YbdK subfamily.

It catalyses the reaction L-cysteine + L-glutamate + ATP = gamma-L-glutamyl-L-cysteine + ADP + phosphate + H(+). ATP-dependent carboxylate-amine ligase which exhibits weak glutamate--cysteine ligase activity. This chain is Putative glutamate--cysteine ligase 2-1, found in Frankia alni (strain DSM 45986 / CECT 9034 / ACN14a).